We begin with the raw amino-acid sequence, 129 residues long: M-zodatoxin-Lt8l (129 aa).

The first 20 residues, 1-20 (MKYFVVXXALVAAFACIAES), serve as a signal peptide directing secretion. Positions 21–60 (KPAESEHELAEVEEENELADLEDAVWLEDLADLSDLEETR) are excised as a propeptide.

The protein belongs to the cationic peptide 06 (cytoinsectotoxin) family. In terms of tissue distribution, expressed by the venom gland.

It is found in the secreted. Insecticidal, cytolytic and antimicrobial peptide. Forms voltage-dependent, ion-permeable channels in membranes. At high concentration causes cell membrane lysis. This Lachesana tarabaevi (Spider) protein is M-zodatoxin-Lt8l (cit 1-12).